We begin with the raw amino-acid sequence, 276 residues long: Acetyl-coenzyme A carboxylase carboxyl transferase subunit beta (276 aa).

The 253-residue stretch at 24–276 folds into the CoA carboxyltransferase N-terminal domain; that stretch reads LWRECSNCHE…NNLLNLHSDK (253 aa). Residues Cys-28, Cys-31, Cys-46, and Cys-49 each contribute to the Zn(2+) site. The C4-type zinc finger occupies 28-49; that stretch reads CSNCHEKFYYRRAGVYEVCPNC.

This sequence belongs to the AccD/PCCB family. In terms of assembly, acetyl-CoA carboxylase is a heterohexamer composed of biotin carboxyl carrier protein (AccB), biotin carboxylase (AccC) and two subunits each of ACCase subunit alpha (AccA) and ACCase subunit beta (AccD). Zn(2+) serves as cofactor.

The protein localises to the cytoplasm. It carries out the reaction N(6)-carboxybiotinyl-L-lysyl-[protein] + acetyl-CoA = N(6)-biotinyl-L-lysyl-[protein] + malonyl-CoA. Its pathway is lipid metabolism; malonyl-CoA biosynthesis; malonyl-CoA from acetyl-CoA: step 1/1. Functionally, component of the acetyl coenzyme A carboxylase (ACC) complex. Biotin carboxylase (BC) catalyzes the carboxylation of biotin on its carrier protein (BCCP) and then the CO(2) group is transferred by the transcarboxylase to acetyl-CoA to form malonyl-CoA. This chain is Acetyl-coenzyme A carboxylase carboxyl transferase subunit beta, found in Pediococcus pentosaceus (strain ATCC 25745 / CCUG 21536 / LMG 10740 / 183-1w).